We begin with the raw amino-acid sequence, 484 residues long: tRNA sulfurtransferase (484 aa).

A THUMP domain is found at 61-165 (TLLVELLGRI…NDKMMLIKAR (105 aa)). ATP contacts are provided by residues 183-184 (LI), lysine 265, glycine 287, and glutamine 296. An intrachain disulfide couples cysteine 344 to cysteine 456. Residues 404–484 (LSANEVILDI…DNVKVLNKIS (81 aa)) form the Rhodanese domain. Cysteine 456 serves as the catalytic Cysteine persulfide intermediate.

It belongs to the ThiI family.

The protein resides in the cytoplasm. It carries out the reaction [ThiI sulfur-carrier protein]-S-sulfanyl-L-cysteine + a uridine in tRNA + 2 reduced [2Fe-2S]-[ferredoxin] + ATP + H(+) = [ThiI sulfur-carrier protein]-L-cysteine + a 4-thiouridine in tRNA + 2 oxidized [2Fe-2S]-[ferredoxin] + AMP + diphosphate. The catalysed reaction is [ThiS sulfur-carrier protein]-C-terminal Gly-Gly-AMP + S-sulfanyl-L-cysteinyl-[cysteine desulfurase] + AH2 = [ThiS sulfur-carrier protein]-C-terminal-Gly-aminoethanethioate + L-cysteinyl-[cysteine desulfurase] + A + AMP + 2 H(+). It participates in cofactor biosynthesis; thiamine diphosphate biosynthesis. Catalyzes the ATP-dependent transfer of a sulfur to tRNA to produce 4-thiouridine in position 8 of tRNAs, which functions as a near-UV photosensor. Also catalyzes the transfer of sulfur to the sulfur carrier protein ThiS, forming ThiS-thiocarboxylate. This is a step in the synthesis of thiazole, in the thiamine biosynthesis pathway. The sulfur is donated as persulfide by IscS. In Histophilus somni (strain 2336) (Haemophilus somnus), this protein is tRNA sulfurtransferase.